We begin with the raw amino-acid sequence, 964 residues long: SKI family transcriptional corepressor 1 (964 aa).

6 disordered regions span residues 45-72 (TQLG…SSAL), 278-365 (RTFS…GGSA), 414-452 (AGEP…PGPG), 525-587 (AGGG…RKSS), 610-766 (REAY…GPAA), and 793-842 (YLCT…EDGL). Residues 283–310 (QGGGGGGANSGSGGAGKGGAGGGGGPGC) show a composition bias toward gly residues. The span at 345–355 (ALGLAAAANGP) shows a compositional bias: low complexity. Composition is skewed to gly residues over residues 356 to 365 (AGPGGPGGSA) and 417 to 440 (PKGG…GPGA). A compositionally biased stretch (pro residues) spans 571–583 (SLAPLAPPPPPPA). Positions 652 to 661 (DTADEPEVDV) are enriched in acidic residues. The span at 798 to 808 (ETHEPDKEDNH) shows a compositional bias: basic and acidic residues. The span at 823-834 (DQRSVSQPSPAN) shows a compositional bias: polar residues. Positions 857-921 (ENLAREELQK…DTLCNELDQE (65 aa)) form a coiled coil.

This sequence belongs to the SKI family. Interacts with LBX1. Interacts with SMAD1, SMAD2 and SMAD3.

The protein resides in the nucleus. In terms of biological role, inhibits BMP signaling. Acts as a transcriptional corepressor of LBX1. The sequence is that of SKI family transcriptional corepressor 1 (Skor1) from Rattus norvegicus (Rat).